The primary structure comprises 89 residues: Small ribosomal subunit protein uS15 (89 aa).

This sequence belongs to the universal ribosomal protein uS15 family. In terms of assembly, part of the 30S ribosomal subunit. Forms a bridge to the 50S subunit in the 70S ribosome, contacting the 23S rRNA.

Its function is as follows. One of the primary rRNA binding proteins, it binds directly to 16S rRNA where it helps nucleate assembly of the platform of the 30S subunit by binding and bridging several RNA helices of the 16S rRNA. Functionally, forms an intersubunit bridge (bridge B4) with the 23S rRNA of the 50S subunit in the ribosome. The chain is Small ribosomal subunit protein uS15 from Streptococcus suis (strain 98HAH33).